Consider the following 417-residue polypeptide: Serine hydroxymethyltransferase (417 aa).

(6S)-5,6,7,8-tetrahydrofolate-binding positions include Leu-121 and 125 to 127; that span reads GHL. At Lys-229 the chain carries N6-(pyridoxal phosphate)lysine. Residue 355-357 coordinates (6S)-5,6,7,8-tetrahydrofolate; sequence SPF.

This sequence belongs to the SHMT family. Homodimer. Requires pyridoxal 5'-phosphate as cofactor.

The protein resides in the cytoplasm. The enzyme catalyses (6R)-5,10-methylene-5,6,7,8-tetrahydrofolate + glycine + H2O = (6S)-5,6,7,8-tetrahydrofolate + L-serine. It functions in the pathway one-carbon metabolism; tetrahydrofolate interconversion. It participates in amino-acid biosynthesis; glycine biosynthesis; glycine from L-serine: step 1/1. Catalyzes the reversible interconversion of serine and glycine with tetrahydrofolate (THF) serving as the one-carbon carrier. This reaction serves as the major source of one-carbon groups required for the biosynthesis of purines, thymidylate, methionine, and other important biomolecules. Also exhibits THF-independent aldolase activity toward beta-hydroxyamino acids, producing glycine and aldehydes, via a retro-aldol mechanism. In Xylella fastidiosa (strain M12), this protein is Serine hydroxymethyltransferase.